Reading from the N-terminus, the 219-residue chain is 2-C-methyl-D-erythritol 4-phosphate cytidylyltransferase (219 aa).

The protein belongs to the IspD/TarI cytidylyltransferase family. IspD subfamily.

The enzyme catalyses 2-C-methyl-D-erythritol 4-phosphate + CTP + H(+) = 4-CDP-2-C-methyl-D-erythritol + diphosphate. The protein operates within isoprenoid biosynthesis; isopentenyl diphosphate biosynthesis via DXP pathway; isopentenyl diphosphate from 1-deoxy-D-xylulose 5-phosphate: step 2/6. Catalyzes the formation of 4-diphosphocytidyl-2-C-methyl-D-erythritol from CTP and 2-C-methyl-D-erythritol 4-phosphate (MEP). This is 2-C-methyl-D-erythritol 4-phosphate cytidylyltransferase from Chlamydia trachomatis serovar D (strain ATCC VR-885 / DSM 19411 / UW-3/Cx).